A 265-amino-acid polypeptide reads, in one-letter code: Tryptophan synthase alpha chain (265 aa).

Residues glutamate 50 and aspartate 61 each act as proton acceptor in the active site.

The protein belongs to the TrpA family. In terms of assembly, tetramer of two alpha and two beta chains.

It catalyses the reaction (1S,2R)-1-C-(indol-3-yl)glycerol 3-phosphate + L-serine = D-glyceraldehyde 3-phosphate + L-tryptophan + H2O. Its pathway is amino-acid biosynthesis; L-tryptophan biosynthesis; L-tryptophan from chorismate: step 5/5. Functionally, the alpha subunit is responsible for the aldol cleavage of indoleglycerol phosphate to indole and glyceraldehyde 3-phosphate. The polypeptide is Tryptophan synthase alpha chain (Trichodesmium erythraeum (strain IMS101)).